Consider the following 790-residue polypeptide: von Willebrand factor A domain-containing protein 2 (790 aa).

Residues M1–C22 form the signal peptide. The region spanning D50 to L221 is the VWFA 1 domain. Residues P295–A332 enclose the EGF-like 1 domain. 3 cysteine pairs are disulfide-bonded: C298–C309, C303–C319, and C321–C331. 2 VWFA domains span residues D342 to I518 and D532 to V702. The EGF-like 2 domain occupies P713–E748. 3 disulfides stabilise this stretch: C717–C728, C722–C737, and C739–C747. Positions W758 to P790 are disordered. Positions S764–K778 are enriched in basic residues.

Forms monomers and multimers.

The protein localises to the secreted. In Xenopus laevis (African clawed frog), this protein is von Willebrand factor A domain-containing protein 2 (vwa2).